The chain runs to 480 residues: Ribulose bisphosphate carboxylase large chain (480 aa).

Residues 1–2 (MS) constitute a propeptide that is removed on maturation. P3 carries the N-acetylproline modification. N6,N6,N6-trimethyllysine is present on K14. Substrate is bound by residues N123 and T173. Residue K175 is the Proton acceptor of the active site. Residue K177 participates in substrate binding. Mg(2+) contacts are provided by K201, D203, and E204. Residue K201 is modified to N6-carboxylysine. The active-site Proton acceptor is the H294. Substrate-binding residues include R295, H327, and S379.

Belongs to the RuBisCO large chain family. Type I subfamily. As to quaternary structure, heterohexadecamer of 8 large chains and 8 small chains; disulfide-linked. The disulfide link is formed within the large subunit homodimers. Mg(2+) is required as a cofactor. In terms of processing, the disulfide bond which can form in the large chain dimeric partners within the hexadecamer appears to be associated with oxidative stress and protein turnover.

It localises to the plastid. Its subcellular location is the chloroplast. It catalyses the reaction 2 (2R)-3-phosphoglycerate + 2 H(+) = D-ribulose 1,5-bisphosphate + CO2 + H2O. The catalysed reaction is D-ribulose 1,5-bisphosphate + O2 = 2-phosphoglycolate + (2R)-3-phosphoglycerate + 2 H(+). RuBisCO catalyzes two reactions: the carboxylation of D-ribulose 1,5-bisphosphate, the primary event in carbon dioxide fixation, as well as the oxidative fragmentation of the pentose substrate in the photorespiration process. Both reactions occur simultaneously and in competition at the same active site. This Phalaenopsis aphrodite subsp. formosana (Moth orchid) protein is Ribulose bisphosphate carboxylase large chain.